A 540-amino-acid polypeptide reads, in one-letter code: Beta-2-syntrophin (540 aa).

Residues 73-114 form a disordered region; sequence LPNGGGAGDSLPGSPSRGLGPPSPPAPPRGPAGEAGASPPVR. Positions 81 to 92 are enriched in low complexity; sequence DSLPGSPSRGLG. A compositionally biased stretch (pro residues) spans 93–102; sequence PPSPPAPPRG. 8 positions are modified to phosphoserine: Ser-95, Ser-110, Ser-129, Ser-211, Ser-222, Ser-233, Ser-393, and Ser-395. A compositionally biased stretch (low complexity) spans 103–112; the sequence is PAGEAGASPP. A PDZ domain is found at 115-198; that stretch reads RVRVVKQEAG…EVLLEVKFIR (84 aa). PH domains are found at residues 163 to 300 and 325 to 437; these read ILSV…TNIM and EVKH…QGCH. Residues 220-240 form a disordered region; it reads PQSPSFSGSEDSGSPKHQNST. Residues 222–231 are compositionally biased toward low complexity; sequence SPSFSGSEDS. An SU domain is found at 484 to 540; it reads PFERLKMSADDGIRNLYLDFGGPEGELTMDLHSCPKPIVFVLHTFLSAKVTRMGLLV. Positions 518–540 are calmodulin-binding; that stretch reads PKPIVFVLHTFLSAKVTRMGLLV.

It belongs to the syntrophin family. As to quaternary structure, monomer and homodimer. Interacts with the other members of the syntrophin family: SNTA1 and SNTB1; and with the sodium channel proteins SCN4A and SCN5A. Interacts with SAST, MAST205, microtubules and microtubule-associated proteins. Interacts with the dystrophin protein DMD and related proteins DTNA and UTRN, and with the neuroregulin receptor ERBB4. Interacts with PTPRN when phosphorylated, protecting PTPRN from protein cleavage by CAPN1. Dephosphorylation upon insulin stimulation disrupts the interaction with PTPRN and results in the cleavage of PTPRN. Interacts with DTNB. Post-translationally, phosphorylated. Partially dephosphorylated upon insulin stimulation. In terms of tissue distribution, ubiquitous. Isoform 1 is the predominant isoform. Weak level of isoform 2 is present in all tested tissues, except in liver and heart where it is highly expressed.

Its subcellular location is the membrane. The protein resides in the cytoplasmic vesicle. It is found in the secretory vesicle membrane. The protein localises to the cell junction. It localises to the cytoplasm. Its subcellular location is the cytoskeleton. In terms of biological role, adapter protein that binds to and probably organizes the subcellular localization of a variety of membrane proteins. May link various receptors to the actin cytoskeleton and the dystrophin glycoprotein complex. May play a role in the regulation of secretory granules via its interaction with PTPRN. The chain is Beta-2-syntrophin (SNTB2) from Homo sapiens (Human).